The sequence spans 234 residues: Sugar fermentation stimulation protein homolog (234 aa).

It belongs to the SfsA family.

The protein is Sugar fermentation stimulation protein homolog of Pectobacterium atrosepticum (strain SCRI 1043 / ATCC BAA-672) (Erwinia carotovora subsp. atroseptica).